The following is a 481-amino-acid chain: MQRFEILDKDAMGRICRIETPHGRIETPTILPVINPNIPFIRAEEMKKFGAQAVITNSYIIYRSMREEALEKGVHGILETDMPVMTDSGSYQLMVYGDVEIKNAEIVEFQRHIGSDIIVPLDIPTPPDADYATAESDLRITLEREREAKELLKGAENLLAVPVQGSTHPDLRRFAAGEARKIGGDIYPIGAVVPLMDAYRFRDLARVILEVRSALPVEPIHLFGCGHPMLFAMAVALGCDLFDSAAYALYAKDDRYLTVYGTKKLSELNYFPCKCPVCSNHDPEELRRMEKNERERLIAEHNLYVSFQEIETIKQAIKENSLFELVEKRVRAHPNMLAGWRQVKHYWELLEKADPKMKRKFLYTGIDSLYRPAVRRHVKAIKNVELPEEVLVSTDFGIYANIYLRPVFGPVPAEMLETYPAGHAEIPEEDVVEEEALKAASEALMELMNSHPEKRFKVYVSKVWMKHLQNLPPNGELNVLS.

Aspartate 87 (nucleophile) is an active-site residue. Substrate-binding residues include aspartate 122 and alanine 191. Residues cysteine 273, cysteine 275, and cysteine 278 each contribute to the Zn(2+) site.

The protein belongs to the archaeosine tRNA-ribosyltransferase family. Requires Zn(2+) as cofactor.

The enzyme catalyses guanosine(15) in tRNA + 7-cyano-7-deazaguanine = 7-cyano-7-carbaguanosine(15) in tRNA + guanine. Its pathway is tRNA modification; archaeosine-tRNA biosynthesis. Its function is as follows. Exchanges the guanine residue with 7-cyano-7-deazaguanine (preQ0) at position 15 in the dihydrouridine loop (D-loop) of archaeal tRNAs. This Archaeoglobus fulgidus (strain ATCC 49558 / DSM 4304 / JCM 9628 / NBRC 100126 / VC-16) protein is tRNA-guanine(15) transglycosylase.